Here is a 144-residue protein sequence, read N- to C-terminus: Transcription antitermination protein NusB (144 aa).

This sequence belongs to the NusB family.

Functionally, involved in transcription antitermination. Required for transcription of ribosomal RNA (rRNA) genes. Binds specifically to the boxA antiterminator sequence of the ribosomal RNA (rrn) operons. The sequence is that of Transcription antitermination protein NusB from Histophilus somni (strain 129Pt) (Haemophilus somnus).